A 409-amino-acid chain; its full sequence is uncharacterized protein (409 aa).

Helical transmembrane passes span 18–38 (ALSA…ADVV), 47–67 (GPLL…TGVG), 100–120 (VVTV…ALVI), 159–179 (VGAM…GNAY), 180–200 (APAL…LLWL), 232–252 (FWLY…FGLL), 260–280 (GVLA…ADAL), 302–322 (ILSI…VVIG), 355–375 (GVFA…IGWL), and 380–400 (IGTL…MMFA).

It localises to the cell membrane. This is an uncharacterized protein from Mycobacterium tuberculosis (strain CDC 1551 / Oshkosh).